The sequence spans 211 residues: Protein-methionine-sulfoxide reductase heme-binding subunit MsrQ (211 aa).

Helical transmembrane passes span 10–30, 82–102, 116–136, and 153–173; these read WLKVCLHLAGLLPFLWLVWAI, LWCFAWATLHLTSYALLELGV, PYLTLGIISWIILLALAFTST, and FVYLVAILAPIHYLWSVKIIS.

The protein belongs to the MsrQ family. As to quaternary structure, heterodimer of a catalytic subunit (MsrP) and a heme-binding subunit (MsrQ). FMN serves as cofactor. Heme b is required as a cofactor.

It localises to the cell inner membrane. Part of the MsrPQ system that repairs oxidized periplasmic proteins containing methionine sulfoxide residues (Met-O), using respiratory chain electrons. Thus protects these proteins from oxidative-stress damage caused by reactive species of oxygen and chlorine generated by the host defense mechanisms. MsrPQ is essential for the maintenance of envelope integrity under bleach stress, rescuing a wide series of structurally unrelated periplasmic proteins from methionine oxidation, including the primary periplasmic chaperone SurA and the lipoprotein Pal. MsrQ provides electrons for reduction to the reductase catalytic subunit MsrP, using the quinone pool of the respiratory chain. The sequence is that of Protein-methionine-sulfoxide reductase heme-binding subunit MsrQ from Escherichia coli O157:H7.